A 457-amino-acid polypeptide reads, in one-letter code: BAG family molecular chaperone regulator 4 (457 aa).

The tract at residues 1 to 101 is disordered; the sequence is MSALRRSGYG…QPPYPSYNSN (101 aa). Ser7 is subject to Phosphoserine. Low complexity predominate over residues 8 to 20; sequence GYGPSDGPSYGRY. Over residues 30-47 the composition is skewed to pro residues; it reads VHPPPPLYPLRPEPPQPP. Omega-N-methylarginine is present on residues Arg40, Arg53, and Arg108. 3 disordered regions span residues 113–136, 166–333, and 347–377; these read YPSTYPVRPELQGQSLNSYTNGAY, STEV…DDSD, and LYGNATSDHPNNQDQSSSLPEECVPSDESTP. Polar residues predominate over residues 166 to 182; it reads STEVPSTYRSSGNSPTP. Arg185 carries the post-translational modification Omega-N-methylarginine. 2 stretches are compositionally biased toward low complexity: residues 274–284 and 294–308; these read STSPWPSSGSP and QPKDSSYPYSQSDQS. Polar residues-rich tracts occupy residues 320 to 333 and 347 to 365; these read QYESSGTVNNDDSD and LYGNATSDHPNNQDQSSSL. The BAG domain occupies 379 to 456; the sequence is SIKKIIHVLE…AILEKLEKKG (78 aa).

In terms of assembly, binds to the ATPase domain of HSP/HSC70 chaperones. Binds to the death domain of TNFRSF1A in the absence of TNF and thereby prevents binding of adapter molecules such as TRADD or TRAF2. Binds to the death domain of TNFRSF12. Interacts with PRKN. Ubiquitous.

It localises to the cytoplasm. Functionally, inhibits the chaperone activity of HSP70/HSC70 by promoting substrate release. Prevents constitutive TNFRSF1A signaling. Negative regulator of PRKN translocation to damaged mitochondria. The chain is BAG family molecular chaperone regulator 4 (BAG4) from Homo sapiens (Human).